Consider the following 536-residue polypeptide: Protein GvpD1 (536 aa).

39-46 (GAPGTGKT) lines the ATP pocket. Positions 352-413 (GPSDSADRYD…SDQPHPIDED (62 aa)) are disordered. The span at 363-372 (PDSTESFSEM) shows a compositional bias: polar residues. Positions 373–385 (ATTTPPDDAPTAT) are enriched in low complexity. A compositionally biased stretch (basic and acidic residues) spans 386–396 (HETDGADDGSR).

This sequence belongs to the gas vesicle GvpD family. As to quaternary structure, interacts with GvpE.

It localises to the cytoplasm. Functionally, causes a decrease in the amount of GvpE protein. The 5'-region of its promoter or mRNA has a repressive function on downstream genes. Gas vesicles are hollow, gas filled proteinaceous nanostructures found in several microbial planktonic microorganisms. They allow positioning of halobacteria at the optimal depth for growth in the poorly aerated, shallow brine pools of their habitat. Expression of a 9.5 kb p-vac DNA fragment containing 2 divergently transcribed regions (gvpD-gvpE-gvpF-gvpG-gvpH-gvpI-gvpJ-gvpK-gvpL-gvpM and gvpA-gvpC-gvpN-gvpO) allows H.volcanii to produce gas vesicles. A similar region restores gas vesicle production in H.halobium without the p-vac locus, but it still has the c-vac locus. The sequence is that of Protein GvpD1 (gvpD11) from Halobacterium salinarum (strain ATCC 700922 / JCM 11081 / NRC-1) (Halobacterium halobium).